The sequence spans 186 residues: Photosystem I assembly protein Ycf4 (186 aa).

The next 2 helical transmembrane spans lie at Phe22–Ser42 and Ile57–Ser77.

This sequence belongs to the Ycf4 family.

Its subcellular location is the plastid. The protein localises to the chloroplast thylakoid membrane. In terms of biological role, seems to be required for the assembly of the photosystem I complex. The sequence is that of Photosystem I assembly protein Ycf4 from Dioscorea elephantipes (Elephant's foot yam).